Here is a 456-residue protein sequence, read N- to C-terminus: Alcohol acyltransferase 1 (456 aa).

Residues H166 and D382 each act as proton acceptor in the active site.

It belongs to the plant acyltransferase family. Expressed in fruit.

It carries out the reaction 3-(methylsulfanyl)propanoyl-CoA + butan-1-ol = butyl 3-(methylsulfanyl)propanoate + CoA. The enzyme catalyses ethanol + benzoyl-CoA = ethyl benzoate + CoA. It catalyses the reaction butan-1-ol + benzoyl-CoA = butyl benzoate + CoA. The catalysed reaction is 2-(methylsulfanyl)acetyl-CoA + butan-1-ol = butyl 2-(methylsulfanyl)acetate + CoA. Functionally, involved in the biosynthesis of volatile esters which confer kiwifruit flavor. Alcohol acyl transferase that can use a wide range of alcohols as substrate to produce esters. Exhibits benzoyl-CoA:alcohol O-acyltransferase activity. This Actinidia deliciosa (Kiwi) protein is Alcohol acyltransferase 1.